A 342-amino-acid chain; its full sequence is Phosphate acyltransferase (342 aa).

It belongs to the PlsX family. In terms of assembly, homodimer. Probably interacts with PlsY.

It is found in the cytoplasm. The catalysed reaction is a fatty acyl-[ACP] + phosphate = an acyl phosphate + holo-[ACP]. Its pathway is lipid metabolism; phospholipid metabolism. Its function is as follows. Catalyzes the reversible formation of acyl-phosphate (acyl-PO(4)) from acyl-[acyl-carrier-protein] (acyl-ACP). This enzyme utilizes acyl-ACP as fatty acyl donor, but not acyl-CoA. The protein is Phosphate acyltransferase of Shewanella baltica (strain OS155 / ATCC BAA-1091).